The following is a 166-amino-acid chain: Regulatory protein RecX (166 aa).

It belongs to the RecX family.

Its subcellular location is the cytoplasm. Modulates RecA activity. In Shigella boydii serotype 4 (strain Sb227), this protein is Regulatory protein RecX.